The chain runs to 377 residues: Presenilin-associated rhomboid-like protein, mitochondrial (377 aa).

The transit peptide at 1–50 directs the protein to the mitochondrion; the sequence is MALYSWVQRGWRCGQTWAPLLGGGYRELSATQARQLLGRRFNLLLQQKCG. At 51 to 95 the chain is on the mitochondrial matrix side; sequence FRKAPRKVEPRRSDTGSSGEAYKRSALIPPLEETVFYPSPYPVRT. A phosphoserine mark is found at S63 and S68. Residues 96-116 form a helical membrane-spanning segment; that stretch reads LLKPFFFTVGFTGCAFGSAAI. The Mitochondrial intermembrane segment spans residues 117 to 165; the sequence is WQYESLKSRVQSYFDGIKADWLDSIRPQKEGNLRKEINKWWNSLSDGQR. A helical membrane pass occupies residues 166 to 186; that stretch reads TVTGIIAANALVFCLWRVPSL. The Mitochondrial matrix portion of the chain corresponds to 187–214; it reads HRTMIRYFTSNPASKVLCSPMLLSTFSH. A helical membrane pass occupies residues 215–235; sequence FSLFHMAANMYVLWSFSTSIV. The Mitochondrial intermembrane portion of the chain corresponds to 236 to 242; the sequence is NILGQEQ. Residues 243–263 traverse the membrane as a helical segment; it reads FVAVYLSAGVISNFVSYVCKV. Topologically, residues 264–268 are mitochondrial matrix; sequence ATGRY. Residues 269–289 traverse the membrane as a helical segment; it reads GPSLGASGAIMTVLAAVCTKI. Residue S275 is the Nucleophile of the active site. Topologically, residues 290–293 are mitochondrial intermembrane; it reads PEGR. The helical transmembrane segment at 294–314 threads the bilayer; sequence LAIIFLPVFTFTAGNALKAII. The Mitochondrial matrix segment spans residues 315–331; the sequence is AMDTAGMILGWKFFDHA. The chain crosses the membrane as a helical span at residues 332–352; that stretch reads AHLGGALFGIWYITYGHELIW. Residue H333 is part of the active site. Over 353-377 the chain is Mitochondrial intermembrane; that stretch reads KNREPLVKIWHEIRTNGPKKGGGSK.

It belongs to the peptidase S54 family. In terms of assembly, interacts with PSEN1 and PSEN2. Binds OPA1. In terms of processing, P-beta is proteolytically processed (beta-cleavage) in a PARL-dependent manner.

Its subcellular location is the mitochondrion inner membrane. It is found in the nucleus. The enzyme catalyses Cleaves type-1 transmembrane domains using a catalytic dyad composed of serine and histidine that are contributed by different transmembrane domains.. Required for the control of apoptosis during postnatal growth. Essential for proteolytic processing of an antiapoptotic form of OPA1 which prevents the release of mitochondrial cytochrome c in response to intrinsic apoptotic signals. Required for the maturation of PINK1 into its 52kDa mature form after its cleavage by mitochondrial-processing peptidase (MPP). Promotes cleavage of serine/threonine-protein phosphatase PGAM5 in damaged mitochondria in response to loss of mitochondrial membrane potential. Mediates differential cleavage of PINK1 and PGAM5 depending on the health status of mitochondria, disassociating from PINK1 and associating with PGAM5 in response to mitochondrial membrane potential loss. Required for processing of CLPB into a form with higher protein disaggregase activity by removing an autoinhibitory N-terminal peptide. Promotes processing of DIABLO/SMAC in the mitochondrion which is required for DIABLO apoptotic activity. Also required for cleavage of STARD7 and TTC19. Promotes changes in mitochondria morphology regulated by phosphorylation of P-beta domain. The protein is Presenilin-associated rhomboid-like protein, mitochondrial of Rattus norvegicus (Rat).